We begin with the raw amino-acid sequence, 112 residues long: CENP-A recruiting complex protein mis19 (112 aa).

As to quaternary structure, component of the CENP-A recruiting complex composed of at least mis16, mis19, mis19 and mis20.

The protein resides in the chromosome. It is found in the centromere. The protein localises to the kinetochore. Component of the CENP-A recruiting complex that ensures the integrity of mitotic spindles through maintenance of kinetochore factors mis6/CENP-I and cnp1/CENP-A. Links mis16 and mis18 to recruit CENP-A through interacting with non-sense-mediated mRNA decay (NMD) factors and the SWI/SNF complex. Also links mis18 with the CCAN/mis6/ctf19 complex to promote CENP-A assembly. The sequence is that of CENP-A recruiting complex protein mis19 from Schizosaccharomyces pombe (strain 972 / ATCC 24843) (Fission yeast).